The sequence spans 189 residues: Interferon alpha-5 (189 aa).

An N-terminal signal peptide occupies residues Met-1–Ser-21. 2 disulfides stabilise this stretch: Cys-24/Cys-122 and Cys-52/Cys-162.

This sequence belongs to the alpha/beta interferon family.

The protein resides in the secreted. Functionally, produced by macrophages, IFN-alpha have antiviral activities. Interferon stimulates the production of two enzymes: a protein kinase and an oligoadenylate synthetase. The protein is Interferon alpha-5 (IFNA5) of Homo sapiens (Human).